We begin with the raw amino-acid sequence, 249 residues long: tRNA(Phe) (4-demethylwyosine(37)-C(7)) aminocarboxypropyltransferase (249 aa).

Residues Ser80, Arg87, Glu127, and Asp154–Asn155 contribute to the S-adenosyl-L-methionine site.

This sequence belongs to the class I-like SAM-binding methyltransferase superfamily. TRM5/TYW2 family.

Its subcellular location is the cytoplasm. The catalysed reaction is 4-demethylwyosine(37) in tRNA(Phe) + S-adenosyl-L-methionine = 4-demethyl-7-[(3S)-3-amino-3-carboxypropyl]wyosine(37) in tRNA(Phe) + S-methyl-5'-thioadenosine + H(+). In terms of biological role, S-adenosyl-L-methionine-dependent transferase that acts as a component of the wyosine derivatives biosynthesis pathway. Catalyzes the transfer of the alpha-amino-alpha-carboxypropyl (acp) group from S-adenosyl-L-methionine to 4-demethylwyosine (imG-14), forming 7-aminocarboxypropyl-demethylwyosine (wybutosine-86) at position 37 of tRNA(Phe). This is tRNA(Phe) (4-demethylwyosine(37)-C(7)) aminocarboxypropyltransferase from Methanocaldococcus jannaschii (strain ATCC 43067 / DSM 2661 / JAL-1 / JCM 10045 / NBRC 100440) (Methanococcus jannaschii).